The sequence spans 364 residues: Very-long-chain (3R)-3-hydroxyacyl-CoA dehydratase 3 (364 aa).

Topologically, residues 1 to 151 are cytoplasmic; the sequence is MAMENQVLTP…ETLTNLRKGY (151 aa). The region spanning 7-96 is the CS domain; the sequence is VLTPHVYWAQ…KVSQWWERLT (90 aa). Thr9 bears the Phosphothreonine mark. Residues 113–138 are a coiled coil; it reads LDESDAEMELRAKEEERLNKLRLESE. A phosphoserine mark is found at Ser116 and Ser137. Residues 152–172 traverse the membrane as a helical segment; the sequence is LFMYNLVQFLGFSWIFVNLTV. Residues 173-191 are Lumenal-facing; that stretch reads RFCILGKESFYDTFHTVAD. A helical membrane pass occupies residues 192-212; the sequence is MMYFCQMLAVVETINAAIGVT. The Cytoplasmic portion of the chain corresponds to 213 to 214; sequence TS. Residues 215-235 traverse the membrane as a helical segment; the sequence is PVLPSLIQLLGRNFILFIIFG. Topologically, residues 236–244 are lumenal; it reads TMEEMQNKA. Residues 245-265 form a helical membrane-spanning segment; sequence VVFFVFYLWSAIEIFRYSFYM. Residues 266-282 are Cytoplasmic-facing; it reads LTCIDMDWEVLTWLRYT. Residues 283–303 traverse the membrane as a helical segment; that stretch reads LWIPLYPLGCLAEAVSVVQSI. Catalysis depends on residues Tyr288 and Glu295. Over 304–324 the chain is Lumenal; the sequence is PIFNETGRFSFTLPYPVKIKV. The helical transmembrane segment at 325–345 threads the bilayer; sequence RFSFFLQIYLIMIFLGLYINF. Over 346–364 the chain is Cytoplasmic; the sequence is RHLYKQRRRRYGQKKKKIH.

The protein belongs to the very long-chain fatty acids dehydratase HACD family. May interact with enzymes of the ELO family (including ELOVL1); with those enzymes that mediate condensation, the first of the four steps of the reaction cycle responsible for fatty acids elongation, may be part of a larger fatty acids elongase complex. Interacts with RAC1.

The protein resides in the endoplasmic reticulum membrane. The catalysed reaction is a very-long-chain (3R)-3-hydroxyacyl-CoA = a very-long-chain (2E)-enoyl-CoA + H2O. It carries out the reaction (3R)-hydroxyhexadecanoyl-CoA = (2E)-hexadecenoyl-CoA + H2O. It functions in the pathway lipid metabolism; fatty acid biosynthesis. Its function is as follows. Catalyzes the third of the four reactions of the long-chain fatty acids elongation cycle. This endoplasmic reticulum-bound enzymatic process, allows the addition of two carbons to the chain of long- and very long-chain fatty acids/VLCFAs per cycle. This enzyme catalyzes the dehydration of the 3-hydroxyacyl-CoA intermediate into trans-2,3-enoyl-CoA, within each cycle of fatty acid elongation. Thereby, it participates in the production of VLCFAs of different chain lengths that are involved in multiple biological processes as precursors of membrane lipids and lipid mediators. Involved in Rac1-signaling pathways leading to the modulation of gene expression. This chain is Very-long-chain (3R)-3-hydroxyacyl-CoA dehydratase 3, found in Pongo abelii (Sumatran orangutan).